A 199-amino-acid chain; its full sequence is UPF0637 protein YsbB (199 aa).

This sequence belongs to the UPF0637 family.

The sequence is that of UPF0637 protein YsbB (ysbB) from Lactococcus lactis subsp. lactis (strain IL1403) (Streptococcus lactis).